The primary structure comprises 232 residues: Ribonuclease 3 (232 aa).

Residues 7 to 136 form the RNase III domain; sequence AALLEDTIDY…LLGAVFCDGG (130 aa). Position 49 (Glu-49) interacts with Mg(2+). Asp-53 is a catalytic residue. Positions 122 and 125 each coordinate Mg(2+). The active site involves Glu-125. The 70-residue stretch at 163 to 232 folds into the DRBM domain; it reads DYKTRLQERL…AKQALEYLEE (70 aa).

The protein belongs to the ribonuclease III family. Homodimer. It depends on Mg(2+) as a cofactor.

It localises to the cytoplasm. The catalysed reaction is Endonucleolytic cleavage to 5'-phosphomonoester.. In terms of biological role, digests double-stranded RNA. Involved in the processing of primary rRNA transcript to yield the immediate precursors to the large and small rRNAs (23S and 16S). Processes some mRNAs, and tRNAs when they are encoded in the rRNA operon. Processes pre-crRNA and tracrRNA of type II CRISPR loci if present in the organism. The sequence is that of Ribonuclease 3 from Syntrophotalea carbinolica (strain DSM 2380 / NBRC 103641 / GraBd1) (Pelobacter carbinolicus).